An 860-amino-acid chain; its full sequence is Leucine--tRNA ligase (860 aa).

The short motif at 42-52 (PYPSGRLHMGH) is the 'HIGH' region element. Residues 619–623 (KMSKS) carry the 'KMSKS' region motif. K622 serves as a coordination point for ATP.

This sequence belongs to the class-I aminoacyl-tRNA synthetase family.

It localises to the cytoplasm. The catalysed reaction is tRNA(Leu) + L-leucine + ATP = L-leucyl-tRNA(Leu) + AMP + diphosphate. In Salmonella choleraesuis (strain SC-B67), this protein is Leucine--tRNA ligase.